We begin with the raw amino-acid sequence, 226 residues long: Cobalt transport protein CbiM 1 (226 aa).

The next 6 membrane-spanning stretches (helical) occupy residues 6–26 (GFLP…VVAY), 43–63 (MLLG…MPSV), 75–95 (LGAI…VLLF), 107–127 (TLGA…AAVF), 135–155 (FPFG…TYVT), and 181–201 (VFAL…VVVM).

It belongs to the CbiM family. Forms an energy-coupling factor (ECF) transporter complex composed of an ATP-binding protein (A component, CbiO), a transmembrane protein (T component, CbiQ) and 2 possible substrate-capture proteins (S components, CbiM and CbiN) of unknown stoichimetry.

It localises to the cell inner membrane. The protein operates within cofactor biosynthesis; adenosylcobalamin biosynthesis. Part of the energy-coupling factor (ECF) transporter complex CbiMNOQ involved in cobalt import. The protein is Cobalt transport protein CbiM 1 (cbim1) of Pelobacter propionicus (strain DSM 2379 / NBRC 103807 / OttBd1).